Here is a 667-residue protein sequence, read N- to C-terminus: E3 ubiquitin-protein ligase Midline-1 (667 aa).

An RING-type zinc finger spans residues 10–60; sequence CPICLELFEDPLLLPCAHSLCFNCAHRILVSHCATNEPVESINAFQCPTCR. A phosphoserine mark is found at Ser92 and Ser96. 2 B box-type zinc fingers span residues 116 to 165 and 172 to 212; these read KVLC…IEPI and GLMC…VAAL. Cys119, Cys122, Cys134, Cys137, Cys142, Cys145, His150, His159, Cys175, His178, Cys198, and His204 together coordinate Zn(2+). A coiled-coil region spans residues 205–264; the sequence is RDHQVAALSERYDKLKQNLESNLTNLIKRNTELETLLAKLIQTCQHVEVNASRQEAKLTE. The COS domain maps to 320–379; sequence LKENDHARFLQTAKNITERVSMATASSQVLIPEINLNDTFDTFALDFSREKKLLECLDYL. The 104-residue stretch at 381–484 folds into the Fibronectin type-III domain; it reads APNPPTIREE…EPGKLKTNSQ (104 aa). Polar residues predominate over residues 471 to 485; sequence SRSSEPGKLKTNSQP. Residues 471 to 524 are disordered; the sequence is SRSSEPGKLKTNSQPFKLDPKSAHRKLKVSHDNLTVERDESSSKKSHTPERFTS. The 178-residue stretch at 482–659 folds into the B30.2/SPRY domain; the sequence is NSQPFKLDPK…IITGLPIPDH (178 aa). Over residues 499–520 the composition is skewed to basic and acidic residues; the sequence is VSHDNLTVERDESSSKKSHTPE. At Ser511 the chain carries Phosphoserine.

It belongs to the TRIM/RBCC family. As to quaternary structure, homodimer or heterodimer with MID2. Interacts with IGBP1.

It is found in the cytoplasm. It localises to the cytoskeleton. The enzyme catalyses S-ubiquitinyl-[E2 ubiquitin-conjugating enzyme]-L-cysteine + [acceptor protein]-L-lysine = [E2 ubiquitin-conjugating enzyme]-L-cysteine + N(6)-ubiquitinyl-[acceptor protein]-L-lysine.. Its function is as follows. Has E3 ubiquitin ligase activity towards IGBP1, promoting its monoubiquitination, which results in deprotection of the catalytic subunit of protein phosphatase PP2A, and its subsequent degradation by polyubiquitination. The sequence is that of E3 ubiquitin-protein ligase Midline-1 (Mid1) from Rattus norvegicus (Rat).